Reading from the N-terminus, the 379-residue chain is UDP-4-amino-4-deoxy-L-arabinose--oxoglutarate aminotransferase (379 aa).

Lys-182 carries the post-translational modification N6-(pyridoxal phosphate)lysine.

The protein belongs to the DegT/DnrJ/EryC1 family. ArnB subfamily. Homodimer. It depends on pyridoxal 5'-phosphate as a cofactor.

It carries out the reaction UDP-4-amino-4-deoxy-beta-L-arabinose + 2-oxoglutarate = UDP-beta-L-threo-pentopyranos-4-ulose + L-glutamate. It participates in nucleotide-sugar biosynthesis; UDP-4-deoxy-4-formamido-beta-L-arabinose biosynthesis; UDP-4-deoxy-4-formamido-beta-L-arabinose from UDP-alpha-D-glucuronate: step 2/3. It functions in the pathway bacterial outer membrane biogenesis; lipopolysaccharide biosynthesis. Catalyzes the conversion of UDP-4-keto-arabinose (UDP-Ara4O) to UDP-4-amino-4-deoxy-L-arabinose (UDP-L-Ara4N). The modified arabinose is attached to lipid A and is required for resistance to polymyxin and cationic antimicrobial peptides. The protein is UDP-4-amino-4-deoxy-L-arabinose--oxoglutarate aminotransferase of Salmonella agona (strain SL483).